A 566-amino-acid polypeptide reads, in one-letter code: 2-isopropylmalate synthase (566 aa).

Residues 32 to 306 (PLWCAVDLRD…DPQIDFSNID (275 aa)) form the Pyruvate carboxyltransferase domain. Residues D41, H245, H247, and N281 each contribute to the Mg(2+) site. The regulatory domain stretch occupies residues 451–566 (PVRPLERIKQ…VVSAINRASR (116 aa)).

It belongs to the alpha-IPM synthase/homocitrate synthase family. LeuA type 2 subfamily. As to quaternary structure, homodimer. Requires Mg(2+) as cofactor.

It localises to the cytoplasm. It catalyses the reaction 3-methyl-2-oxobutanoate + acetyl-CoA + H2O = (2S)-2-isopropylmalate + CoA + H(+). Its pathway is amino-acid biosynthesis; L-leucine biosynthesis; L-leucine from 3-methyl-2-oxobutanoate: step 1/4. In terms of biological role, catalyzes the condensation of the acetyl group of acetyl-CoA with 3-methyl-2-oxobutanoate (2-ketoisovalerate) to form 3-carboxy-3-hydroxy-4-methylpentanoate (2-isopropylmalate). This is 2-isopropylmalate synthase from Mycobacterium ulcerans (strain Agy99).